Reading from the N-terminus, the 152-residue chain is Transcriptional regulator MraZ (152 aa).

2 consecutive SpoVT-AbrB domains span residues 5 to 52 (ATMV…PLPE) and 81 to 124 (ASEC…DEQT).

It belongs to the MraZ family. Forms oligomers.

It is found in the cytoplasm. The protein localises to the nucleoid. Its function is as follows. Negatively regulates its own expression and that of the subsequent genes in the proximal part of the division and cell wall (dcw) gene cluster. Acts by binding directly to DNA. May also regulate the expression of genes outside the dcw cluster. This is Transcriptional regulator MraZ from Yersinia pestis bv. Antiqua (strain Antiqua).